The primary structure comprises 1036 residues: KAT8 regulatory NSL complex subunit 1 (1036 aa).

Position 104 is an N6-acetyllysine (K104). 2 disordered regions span residues 145-211 (GQTA…CTLP) and 226-257 (NSTA…SSSN). Over residues 226–244 (NSTANKSSVNSMDQPALQG) the composition is skewed to polar residues. Positions 245–256 (SSRLSPSTDSSS) are enriched in low complexity. Residue S249 is modified to Phosphoserine. K262 participates in a covalent cross-link: Glycyl lysine isopeptide (Lys-Gly) (interchain with G-Cter in SUMO2). S268 is subject to Phosphoserine. A coiled-coil region spans residues 285–312 (TALLRRQADIEIRARRLQKRLQVVQAKQ). K331 participates in a covalent cross-link: Glycyl lysine isopeptide (Lys-Gly) (interchain with G-Cter in SUMO2). 2 disordered regions span residues 399–423 (DSDV…RADP) and 739–787 (SPSY…RRRG). Residues 759 to 772 (STSSDTSTPTSSGS) show a composition bias toward low complexity. The segment at 781–813 (PVRRRRGESSFDINNIVIPMSVAATTRVEKLQY) is required for activation of KAT8 histone acetyltransferase activity. The PEHE domain occupies 815 to 966 (EILTPSWREV…GLDEQSVQPW (152 aa)). Residues 841–859 (EDLSDAAFAALHAKCEEME) form an interaction with KAT8 HAT domain region. Residues 869-931 (VPPQRRGSRS…SPISPELHSA (63 aa)) are disordered. A compositionally biased stretch (polar residues) spans 886–896 (TTPQLGSANPS). The span at 906-919 (SSSHSLSEFSHGQS) shows a compositional bias: low complexity. S922 and S925 each carry phosphoserine. The residue at position 934 (T934) is a Phosphothreonine. A Phosphoserine modification is found at S976. The interval 989-1020 (DTAARCTRRTSGSKTGREAEVAPTSPPVVPLK) is disordered.

As to quaternary structure, component of the NSL complex at least composed of MOF/KAT8, KANSL1, KANSL2, KANSL3, MCRS1, PHF20, OGT1/OGT, WDR5 and HCFC1. Interacts (via PEHE domain) with KAT8 (via HAT domain); the interaction is direct. Component of some MLL1/MLL complex, at least composed of the core components KMT2A/MLL1, ASH2L, HCFC1, WDR5 and RBBP5, as well as the facultative components BACC1, CHD8, E2F6, HSP70, INO80C, KANSL1, LAS1L, MAX, MCRS1, MGA, KAT8/MOF, PELP1, PHF20, PRP31, RING2, RUVB1/TIP49A, RUVB2/TIP49B, SENP3, TAF1, TAF4, TAF6, TAF7, TAF9 and TEX10.

It is found in the nucleus. The protein resides in the chromosome. The protein localises to the centromere. It localises to the kinetochore. Its subcellular location is the mitochondrion. It is found in the cytoplasm. The protein resides in the cytoskeleton. The protein localises to the spindle pole. Non-catalytic component of the NSL histone acetyltransferase complex, a multiprotein complex that mediates histone H4 acetylation at 'Lys-5'- and 'Lys-8' (H4K5ac and H4K8ac) at transcription start sites and promotes transcription initiation. The NSL complex also acts as a regulator of gene expression in mitochondria. In addition to its role in transcription, KANSL1 also plays an essential role in spindle assembly during mitosis. Associates with microtubule ends and contributes to microtubule stability. This Mus musculus (Mouse) protein is KAT8 regulatory NSL complex subunit 1 (Kansl1).